Here is a 127-residue protein sequence, read N- to C-terminus: Riboflavin kinase (127 aa).

10–15 (GLGEGR) contributes to the CDP binding site. Positions 39 and 41 each coordinate Mg(2+). The FMN site is built by T96 and E104. 109-112 (VHLR) is a binding site for CDP.

This sequence belongs to the archaeal riboflavin kinase family. Requires Mg(2+) as cofactor.

It catalyses the reaction riboflavin + CTP = CDP + FMN + H(+). Its pathway is cofactor biosynthesis; FMN biosynthesis; FMN from riboflavin (CTP route): step 1/1. Catalyzes the CTP-dependent phosphorylation of riboflavin (vitamin B2) to form flavin mononucleotide (FMN). The polypeptide is Riboflavin kinase (Methanococcus maripaludis (strain C7 / ATCC BAA-1331)).